The chain runs to 467 residues: Dimethylamine methyltransferase MtbB1 (467 aa).

Residue pyrrolysine 356 is a non-standard amino acid, pyrrolysine.

It belongs to the dimethylamine methyltransferase family. In terms of assembly, may form homotetramers or homopentamers.

The enzyme catalyses Co(I)-[dimethylamine-specific corrinoid protein] + dimethylamine + H(+) = methyl-Co(III)-[dimethylamine-specific corrinoid protein] + methylamine. Its pathway is one-carbon metabolism; methanogenesis from dimethylamine. Functionally, catalyzes the transfer of a methyl group from dimethylamine to the corrinoid cofactor of MtbC. The major or perhaps only DMA methyltransferase expressed under inducing conditions. In Methanosarcina barkeri, this protein is Dimethylamine methyltransferase MtbB1.